Reading from the N-terminus, the 694-residue chain is Elongation factor G (694 aa).

The 283-residue stretch at 6 to 288 (KLYRNIGIAA…GVIEYLPSPT (283 aa)) folds into the tr-type G domain. GTP contacts are provided by residues 15–22 (AHVDAGKT), 86–90 (DTPGH), and 140–143 (NKMD).

The protein belongs to the TRAFAC class translation factor GTPase superfamily. Classic translation factor GTPase family. EF-G/EF-2 subfamily.

It localises to the cytoplasm. Its function is as follows. Catalyzes the GTP-dependent ribosomal translocation step during translation elongation. During this step, the ribosome changes from the pre-translocational (PRE) to the post-translocational (POST) state as the newly formed A-site-bound peptidyl-tRNA and P-site-bound deacylated tRNA move to the P and E sites, respectively. Catalyzes the coordinated movement of the two tRNA molecules, the mRNA and conformational changes in the ribosome. This is Elongation factor G from Legionella pneumophila (strain Paris).